A 238-amino-acid chain; its full sequence is Dolichyldiphosphatase 1 (238 aa).

The next 4 helical transmembrane spans lie at 33–53 (LAYL…LIIF), 100–120 (PSSH…FLYL), 130–150 (FLDL…AFLV), and 162–182 (WSQV…WFAF).

It belongs to the dolichyldiphosphatase family.

The protein localises to the endoplasmic reticulum membrane. It catalyses the reaction a di-trans,poly-cis-dolichyl diphosphate + H2O = a di-trans,poly-cis-dolichyl phosphate + phosphate + H(+). It functions in the pathway protein modification; protein glycosylation. Its function is as follows. Required for efficient N-glycosylation. Necessary for maintaining optimal levels of dolichol-linked oligosaccharides. Hydrolyzes dolichyl pyrophosphate at a very high rate and dolichyl monophosphate at a much lower rate. Does not act on phosphatidate. This chain is Dolichyldiphosphatase 1 (DOLPP1), found in Rhinolophus ferrumequinum (Greater horseshoe bat).